A 96-amino-acid chain; its full sequence is ATP-dependent Clp protease adapter protein ClpS (96 aa).

The protein belongs to the ClpS family. As to quaternary structure, binds to the N-terminal domain of the chaperone ClpA.

Functionally, involved in the modulation of the specificity of the ClpAP-mediated ATP-dependent protein degradation. The polypeptide is ATP-dependent Clp protease adapter protein ClpS (Campylobacter jejuni subsp. jejuni serotype O:2 (strain ATCC 700819 / NCTC 11168)).